A 478-amino-acid polypeptide reads, in one-letter code: MAHVPARTSPGPGPQLLLLLLPLFLLLLRDVAGSHRAPAWSALPAAADGLQGDRDLQRHPGDAAATLGPSAQDMVAVHMHRLYEKYSRQGARPGGGNTVRSFRARLEVVDQKAVYFFNLTSMQDSEMILTATFHFYSEPPRWPRALEVLCKPRAKNASGRPLPLGPPTRQHLLFRSLSQNTATQGLLRGAMALAPPPRGLWQAKDISPIVKAARRDGELLLSAQLDSEERDPGVPRPSPYAPYILVYANDLAISEPNSVAVTLQRYDPFPAGDPEPRAAPNNSADPRVRRAAQATGPLQDNELPGLDERPPRAHAQHFHKHQLWPSPFRALKPRPGRKDRRKKGQEVFMAASQVLDFDEKTMQKARRKQWDEPRVCSRRYLKVDFADIGWNEWIISPKSFDAYYCAGACEFPMPKIVRPSNHATIQSIVRAVGIIPGIPEPCCVPDKMNSLGVLFLDENRNVVLKVYPNMSVDTCACR.

A signal peptide spans 1–33 (MAHVPARTSPGPGPQLLLLLLPLFLLLLRDVAG). Positions 34–368 (SHRAPAWSAL…EKTMQKARRK (335 aa)) are excised as a propeptide. Residues asparagine 118, asparagine 156, and asparagine 281 are each glycosylated (N-linked (GlcNAc...) asparagine). The tract at residues 266–319 (YDPFPAGDPEPRAAPNNSADPRVRRAAQATGPLQDNELPGLDERPPRAHAQHFH) is disordered. Cystine bridges form between cysteine 376–cysteine 443, cysteine 405–cysteine 475, and cysteine 409–cysteine 477. N-linked (GlcNAc...) asparagine glycosylation is present at asparagine 469.

This sequence belongs to the TGF-beta family. Homodimer or heterodimer. Can form a non-covalent complex of the mature region and the pro-region. As to expression, expressed in femur, brain, lung, skeletal muscle, pancreas and testis.

The protein resides in the secreted. Functionally, growth factor involved in osteogenesis and adipogenesis. Plays an inhibitory role in the process of osteoblast differentiation via SMAD2/3 pathway. Plays an inhibitory role in the process of adipogenesis. The sequence is that of Growth/differentiation factor 10 from Homo sapiens (Human).